The following is a 286-amino-acid chain: PTS system mannose-specific EIID component (286 aa).

Met-1 carries the post-translational modification N-formylmethionine. At 1–17 the chain is on the cytoplasmic side; sequence MSEMVDTTQTTTEKKLT. In terms of domain architecture, PTS EIID spans 14–284; that stretch reads KKLTQSDIRG…GIAGYACGLL (271 aa). The stretch at 18–55 is an intramembrane region; that stretch reads QSDIRGVFLRSNLFQGSWNFERMQALGFCFSMVPAIRR. Topologically, residues 56–62 are cytoplasmic; it reads LYPENNE. Residues 63-95 lie within the membrane without spanning it; sequence ARKQAIRRHLEFFNTQPFVAAPILGVTLALEEQ. Over 96–103 the chain is Cytoplasmic; that stretch reads RANGAEID. Residues 104–143 are membrane-embedded; that stretch reads DGAINGIKVGLMGPLAGVGDPIFWGTVRPVFAALGAGIAM. Residues 144-147 are Periplasmic-facing; that stretch reads SGSL. The chain crosses the lipid bilayer at residues 148–176; it reads LGPLLFFILFNLVRLATRYYGVAYGYSKG. Residues 177–186 are Cytoplasmic-facing; that stretch reads IDIVKDMGGG. The chain crosses the lipid bilayer at residues 187–212; sequence FLQKLTEGASILGLFVMGALVNKWTH. Topologically, residues 213–244 are periplasmic; that stretch reads VNIPLVVSRITDQTGKEHVTTVQTILDQLMPG. A transmembrane helix spans residues 245-258; the sequence is LVPLLLTFACMWLL. Topologically, residues 259 to 264 are cytoplasmic; that stretch reads RKKVNP. A transmembrane helix spans residues 265 to 283; the sequence is LWIIVGFFVIGIAGYACGL. At 284-286 the chain is on the periplasmic side; that stretch reads LGL.

In terms of assembly, homotrimer of protomers that are composed of two subunits, IIC and IID.

Its subcellular location is the cell inner membrane. Functionally, the phosphoenolpyruvate-dependent sugar phosphotransferase system (sugar PTS), a major carbohydrate active transport system, catalyzes the phosphorylation of incoming sugar substrates concomitantly with their translocation across the cell membrane. The enzyme II ManXYZ PTS system is involved in mannose transport. This chain is PTS system mannose-specific EIID component (manZ), found in Escherichia coli O6:H1 (strain CFT073 / ATCC 700928 / UPEC).